Consider the following 801-residue polypeptide: Ferredoxin:CoB-CoM heterodisulfide reductase subunit A (801 aa).

Residue 149–172 (GGGIAGITAALNLADNGVSTVLVE) participates in FAD binding. 4Fe-4S ferredoxin-type domains lie at 239-269 (KKPR…FNCG) and 285-320 (PKIY…FSQK). C248, C251, C254, C258, C295, C303, C306, and C310 together coordinate [4Fe-4S] cluster. A disordered region spans residues 382–409 (FSKASSDPTPATCDSRCEDSSDESQGTD). 4Fe-4S ferredoxin-type domains are found at residues 606-634 (EIAT…VNES) and 635-664 (GRVV…IAGF). Residues C615, C618, C621, C624, C644, C647, C650, and C654 each contribute to the [4Fe-4S] cluster site.

The protein belongs to the HdrA family. As to quaternary structure, the ferredoxin:CoB-CoM heterodisulfide reductase is composed of three subunits; HdrA1, HdrB1 and HdrC1. [4Fe-4S] cluster is required as a cofactor. The cofactor is FAD.

It is found in the cytoplasm. It catalyses the reaction coenzyme B + coenzyme M + 2 oxidized [2Fe-2S]-[ferredoxin] = coenzyme M-coenzyme B heterodisulfide + 2 reduced [2Fe-2S]-[ferredoxin] + 2 H(+). It participates in cofactor metabolism; coenzyme M-coenzyme B heterodisulfide reduction; coenzyme B and coenzyme M from coenzyme M-coenzyme B heterodisulfide: step 1/1. Part of a complex that catalyzes the reversible reduction of CoM-S-S-CoB to the thiol-coenzymes H-S-CoM (coenzyme M) and H-S-CoB (coenzyme B). Probably involved in methylotrophic methanogenesis but not in aceticlastic methanogenesis. In Methanosarcina acetivorans (strain ATCC 35395 / DSM 2834 / JCM 12185 / C2A), this protein is Ferredoxin:CoB-CoM heterodisulfide reductase subunit A.